A 160-amino-acid polypeptide reads, in one-letter code: 2-C-methyl-D-erythritol 2,4-cyclodiphosphate synthase (160 aa).

Asp-11 and His-13 together coordinate a divalent metal cation. Residues 11-13 (DVH) and 37-38 (HS) each bind 4-CDP-2-C-methyl-D-erythritol 2-phosphate. His-45 is an a divalent metal cation binding site. Residues 59 to 61 (DIG) and Arg-145 contribute to the 4-CDP-2-C-methyl-D-erythritol 2-phosphate site.

Belongs to the IspF family. Homotrimer. A divalent metal cation serves as cofactor.

The catalysed reaction is 4-CDP-2-C-methyl-D-erythritol 2-phosphate = 2-C-methyl-D-erythritol 2,4-cyclic diphosphate + CMP. Its pathway is isoprenoid biosynthesis; isopentenyl diphosphate biosynthesis via DXP pathway; isopentenyl diphosphate from 1-deoxy-D-xylulose 5-phosphate: step 4/6. In terms of biological role, involved in the biosynthesis of isopentenyl diphosphate (IPP) and dimethylallyl diphosphate (DMAPP), two major building blocks of isoprenoid compounds. Catalyzes the conversion of 4-diphosphocytidyl-2-C-methyl-D-erythritol 2-phosphate (CDP-ME2P) to 2-C-methyl-D-erythritol 2,4-cyclodiphosphate (ME-CPP) with a corresponding release of cytidine 5-monophosphate (CMP). This Neisseria meningitidis serogroup A / serotype 4A (strain DSM 15465 / Z2491) protein is 2-C-methyl-D-erythritol 2,4-cyclodiphosphate synthase.